Reading from the N-terminus, the 487-residue chain is L-tartrate/succinate antiporter (487 aa).

A run of 14 helical transmembrane segments spans residues 10-30, 33-53, 54-74, 93-113, 137-157, 189-209, 236-256, 292-312, 313-333, 340-360, 370-390, 393-413, 418-438, and 465-485; these read YLAPLAVIAIIALIPVPAGLE, TWLYFAVFTGVIVGLILEPVP, GAVVAMVGISIIAILSPWLLF, WAVSGFSNSVIWLIFAAFMFG, TLFLGYAVMFSELILAPVTPS, IGSYIMWMGIVADCVTSAIFL, FLGMLPLSILLVLLVPWLAYV, LMVGALVLWIFGGDYIDAAMV, GYSVVALMLLLRIISWDDIVS, VFFWLASLITLATGLNNTGFI, SLSGYSPTIVMVALIVVFYLL, FFASATAYTSALAPMMIAAAL, IPLPVFCLMVGAAIGLGSILT, and IFGLIFLVLLVITGLLWMPVV.

The protein belongs to the SLC13A/DASS transporter (TC 2.A.47) family. DIT1 subfamily.

The protein localises to the cell inner membrane. It carries out the reaction (2R,3R)-tartrate(out) + succinate(in) = (2R,3R)-tartrate(in) + succinate(out). Functionally, catalyzes the uptake of tartrate in exchange for intracellular succinate. Essential for anaerobic L-tartrate fermentation. This is L-tartrate/succinate antiporter (ttdT) from Escherichia coli O6:K15:H31 (strain 536 / UPEC).